Here is a 339-residue protein sequence, read N- to C-terminus: Putative methylthioribose-1-phosphate isomerase (339 aa).

Residues 43–45 (RGA), arginine 86, and glutamine 191 each bind substrate. Residue aspartate 232 is the Proton donor of the active site. Position 241–242 (241–242 (NK)) interacts with substrate.

The protein belongs to the eIF-2B alpha/beta/delta subunits family. MtnA subfamily.

The catalysed reaction is 5-(methylsulfanyl)-alpha-D-ribose 1-phosphate = 5-(methylsulfanyl)-D-ribulose 1-phosphate. Functionally, catalyzes the interconversion of methylthioribose-1-phosphate (MTR-1-P) into methylthioribulose-1-phosphate (MTRu-1-P). The protein is Putative methylthioribose-1-phosphate isomerase of Archaeoglobus fulgidus (strain ATCC 49558 / DSM 4304 / JCM 9628 / NBRC 100126 / VC-16).